Reading from the N-terminus, the 359-residue chain is Phosphoserine aminotransferase (359 aa).

Position 42 (Arg-42) interacts with L-glutamate. Residues Ala-76–Ser-77, Trp-102, Thr-152, Asp-171, and Gln-194 each bind pyridoxal 5'-phosphate. The residue at position 195 (Lys-195) is an N6-(pyridoxal phosphate)lysine. A pyridoxal 5'-phosphate-binding site is contributed by Asn-236–Thr-237.

This sequence belongs to the class-V pyridoxal-phosphate-dependent aminotransferase family. SerC subfamily. As to quaternary structure, homodimer. It depends on pyridoxal 5'-phosphate as a cofactor.

It localises to the cytoplasm. It carries out the reaction O-phospho-L-serine + 2-oxoglutarate = 3-phosphooxypyruvate + L-glutamate. The enzyme catalyses 4-(phosphooxy)-L-threonine + 2-oxoglutarate = (R)-3-hydroxy-2-oxo-4-phosphooxybutanoate + L-glutamate. The protein operates within amino-acid biosynthesis; L-serine biosynthesis; L-serine from 3-phospho-D-glycerate: step 2/3. It functions in the pathway cofactor biosynthesis; pyridoxine 5'-phosphate biosynthesis; pyridoxine 5'-phosphate from D-erythrose 4-phosphate: step 3/5. Its function is as follows. Catalyzes the reversible conversion of 3-phosphohydroxypyruvate to phosphoserine and of 3-hydroxy-2-oxo-4-phosphonooxybutanoate to phosphohydroxythreonine. This Ruthia magnifica subsp. Calyptogena magnifica protein is Phosphoserine aminotransferase.